The sequence spans 304 residues: Non-specific ribonucleoside hydrolase RihC (304 aa).

Residue His-233 is part of the active site.

This sequence belongs to the IUNH family. RihC subfamily.

Its function is as follows. Hydrolyzes both purine and pyrimidine ribonucleosides with a broad-substrate specificity. In Escherichia coli (strain SMS-3-5 / SECEC), this protein is Non-specific ribonucleoside hydrolase RihC.